Consider the following 351-residue polypeptide: Photosystem II D2 protein (351 aa).

Residues 39-59 (TAYLAAGGWFTGTTFVTSWYT) traverse the membrane as a helical segment. Residue histidine 116 coordinates chlorophyll a. The helical transmembrane segment at 123-139 (GFCLRQFEIARLVGIRP) threads the bilayer. The pheophytin a site is built by glutamine 128 and asparagine 141. A helical membrane pass occupies residues 151–164 (VFVSVFLLYPLGQA). Histidine 196 is a chlorophyll a binding site. A helical membrane pass occupies residues 206–226 (GALLCAIHGATVENTLFEDGD). The a plastoquinone site is built by histidine 213 and phenylalanine 260. Fe cation is bound at residue histidine 213. A Fe cation-binding site is contributed by histidine 267. The helical transmembrane segment at 277-293 (GLWTSSIGIVGLALNLR) threads the bilayer.

It belongs to the reaction center PufL/M/PsbA/D family. In terms of assembly, PSII is composed of 1 copy each of membrane proteins PsbA, PsbB, PsbC, PsbD, PsbE, PsbF, PsbH, PsbI, PsbJ, PsbK, PsbL, PsbM, PsbT, PsbX, PsbY, PsbZ, Psb30/Ycf12, at least 3 peripheral proteins of the oxygen-evolving complex and a large number of cofactors. It forms dimeric complexes. Requires The D1/D2 heterodimer binds P680, chlorophylls that are the primary electron donor of PSII, and subsequent electron acceptors. It shares a non-heme iron and each subunit binds pheophytin, quinone, additional chlorophylls, carotenoids and lipids. There is also a Cl(-1) ion associated with D1 and D2, which is required for oxygen evolution. The PSII complex binds additional chlorophylls, carotenoids and specific lipids. as cofactor.

It localises to the plastid. It is found in the chloroplast thylakoid membrane. It carries out the reaction 2 a plastoquinone + 4 hnu + 2 H2O = 2 a plastoquinol + O2. In terms of biological role, photosystem II (PSII) is a light-driven water:plastoquinone oxidoreductase that uses light energy to abstract electrons from H(2)O, generating O(2) and a proton gradient subsequently used for ATP formation. It consists of a core antenna complex that captures photons, and an electron transfer chain that converts photonic excitation into a charge separation. The D1/D2 (PsbA/PsbD) reaction center heterodimer binds P680, the primary electron donor of PSII as well as several subsequent electron acceptors. D2 is needed for assembly of a stable PSII complex. In Thalassiosira pseudonana (Marine diatom), this protein is Photosystem II D2 protein.